A 155-amino-acid polypeptide reads, in one-letter code: 6,7-dimethyl-8-ribityllumazine synthase (155 aa).

5-amino-6-(D-ribitylamino)uracil contacts are provided by residues Phe-24, Ala-58–Glu-60, and Ala-82–Ile-84. Position 87–88 (Ser-87–Thr-88) interacts with (2S)-2-hydroxy-3-oxobutyl phosphate. The active-site Proton donor is His-90. Phe-115 contacts 5-amino-6-(D-ribitylamino)uracil. Arg-129 contacts (2S)-2-hydroxy-3-oxobutyl phosphate.

It belongs to the DMRL synthase family.

The enzyme catalyses (2S)-2-hydroxy-3-oxobutyl phosphate + 5-amino-6-(D-ribitylamino)uracil = 6,7-dimethyl-8-(1-D-ribityl)lumazine + phosphate + 2 H2O + H(+). Its pathway is cofactor biosynthesis; riboflavin biosynthesis; riboflavin from 2-hydroxy-3-oxobutyl phosphate and 5-amino-6-(D-ribitylamino)uracil: step 1/2. Catalyzes the formation of 6,7-dimethyl-8-ribityllumazine by condensation of 5-amino-6-(D-ribitylamino)uracil with 3,4-dihydroxy-2-butanone 4-phosphate. This is the penultimate step in the biosynthesis of riboflavin. This is 6,7-dimethyl-8-ribityllumazine synthase from Chlorobium luteolum (strain DSM 273 / BCRC 81028 / 2530) (Pelodictyon luteolum).